The primary structure comprises 226 residues: ATP-dependent dethiobiotin synthetase BioD (226 aa).

An ATP-binding site is contributed by 14–19; that stretch reads GIGKTF. T18 contacts Mg(2+). Residue K39 is part of the active site. S43 is a substrate binding site. Residues D56, 117–120, 177–178, 206–208, and N213 contribute to the ATP site; these read EGVG, NT, and PHI. Mg(2+) contacts are provided by D56 and E117.

Belongs to the dethiobiotin synthetase family. As to quaternary structure, homodimer. Mg(2+) serves as cofactor.

Its subcellular location is the cytoplasm. The catalysed reaction is (7R,8S)-7,8-diammoniononanoate + CO2 + ATP = (4R,5S)-dethiobiotin + ADP + phosphate + 3 H(+). The protein operates within cofactor biosynthesis; biotin biosynthesis; biotin from 7,8-diaminononanoate: step 1/2. In terms of biological role, catalyzes a mechanistically unusual reaction, the ATP-dependent insertion of CO2 between the N7 and N8 nitrogen atoms of 7,8-diaminopelargonic acid (DAPA, also called 7,8-diammoniononanoate) to form a ureido ring. The sequence is that of ATP-dependent dethiobiotin synthetase BioD from Xylella fastidiosa (strain 9a5c).